Reading from the N-terminus, the 388-residue chain is Phosphopentomutase (388 aa).

Mn(2+) is bound by residues D10, D282, H287, D323, H324, and H335.

It belongs to the phosphopentomutase family. The cofactor is Mn(2+).

The protein localises to the cytoplasm. The enzyme catalyses 2-deoxy-alpha-D-ribose 1-phosphate = 2-deoxy-D-ribose 5-phosphate. It catalyses the reaction alpha-D-ribose 1-phosphate = D-ribose 5-phosphate. The protein operates within carbohydrate degradation; 2-deoxy-D-ribose 1-phosphate degradation; D-glyceraldehyde 3-phosphate and acetaldehyde from 2-deoxy-alpha-D-ribose 1-phosphate: step 1/2. Functionally, isomerase that catalyzes the conversion of deoxy-ribose 1-phosphate (dRib-1-P) and ribose 1-phosphate (Rib-1-P) to deoxy-ribose 5-phosphate (dRib-5-P) and ribose 5-phosphate (Rib-5-P), respectively. The chain is Phosphopentomutase from Acetivibrio thermocellus (strain ATCC 27405 / DSM 1237 / JCM 9322 / NBRC 103400 / NCIMB 10682 / NRRL B-4536 / VPI 7372) (Clostridium thermocellum).